The chain runs to 530 residues: Na(+)/H(+) antiporter NhaB (530 aa).

11 helical membrane passes run 23 to 43, 45 to 65, 90 to 110, 113 to 133, 140 to 160, 205 to 225, 238 to 258, 308 to 328, 351 to 371, 451 to 471, and 479 to 499; these read VAII…NPFL, GWLL…CYPL, LVAN…IYFM, LLLF…LLSI, AFLS…SVAV, LLMH…VGEP, FGEF…AGML, IAVW…LIGL, EEAL…AVII, ATPN…APLI, and VIMA…GIMF.

It belongs to the NhaB Na(+)/H(+) (TC 2.A.34) antiporter family.

Its subcellular location is the cell inner membrane. The enzyme catalyses 2 Na(+)(in) + 3 H(+)(out) = 2 Na(+)(out) + 3 H(+)(in). In terms of biological role, na(+)/H(+) antiporter that extrudes sodium in exchange for external protons. In Vibrio cholerae serotype O1 (strain ATCC 39541 / Classical Ogawa 395 / O395), this protein is Na(+)/H(+) antiporter NhaB.